The following is a 540-amino-acid chain: MRVNNGLTPQELEAYGISDVHDIVYNPSYDLLYQEELDPSLTGYERGVLTNLGAVAVDTGIFTGRSPKDKYIVRDDTTRDTFWWADKGKGKNDNKPLSPETWQHLKGLVTKQLSGKRLFVVDAFCGANPDTRLSVRFITEVAWQAHFVKNMFIRPSDEELAGFKPDFIVMNGAKCTNPQWKEQRLNSENFVAFNLTERMQLIGGTWYGGEMKKGMFSMMNYLLPLKGIASMHCSANVGEKGDVAVFFGLSGTGKTTLSTDPKRRLIGDDEHGWDDDGVFNFEGGCYAKTIKLSKEAEPEIYNAIRRDALLENVTVREDGTIDFDDGSKTENTRVSYPIYHIDNIVKPVSKAGHATKVIFLTADAFGVLPPVSRLTADQTQYHFLSGFTAKLAGTERGITEPTPTFSACFGAAFLSLHPTQYAEVLVKRMQAAGAQAYLVNTGWNGTGKRISIKDTRAIIDAILNGSLDNAETFTLPMFNLAIPTELPGVDTKILDPRNTYASPEQWQEKAETLAKLFIDNFDKYTDTPAGAALVAAGPKL.

Residue R65 participates in substrate binding. An N6-acetyllysine modification is found at K87. 2 residues coordinate substrate: Y207 and K213. ATP-binding positions include K213, H232, and 248 to 256 (GLSGTGKTT). Residues K213 and H232 each coordinate Mn(2+). Mn(2+) is bound at residue D269. Residues E297, R333, 449-450 (RI), and T455 each bind ATP. R333 contributes to the substrate binding site. An N6-acetyllysine modification is found at K523.

This sequence belongs to the phosphoenolpyruvate carboxykinase (ATP) family. Monomer. It depends on Mn(2+) as a cofactor.

The protein localises to the cytoplasm. The enzyme catalyses oxaloacetate + ATP = phosphoenolpyruvate + ADP + CO2. It functions in the pathway carbohydrate biosynthesis; gluconeogenesis. In terms of biological role, involved in the gluconeogenesis. Catalyzes the conversion of oxaloacetate (OAA) to phosphoenolpyruvate (PEP) through direct phosphoryl transfer between the nucleoside triphosphate and OAA. The chain is Phosphoenolpyruvate carboxykinase (ATP) from Shigella dysenteriae serotype 1 (strain Sd197).